Here is a 283-residue protein sequence, read N- to C-terminus: Elongation factor Ts (283 aa).

The segment at 79-82 (TDFV) is involved in Mg(2+) ion dislocation from EF-Tu.

The protein belongs to the EF-Ts family.

It is found in the cytoplasm. Associates with the EF-Tu.GDP complex and induces the exchange of GDP to GTP. It remains bound to the aminoacyl-tRNA.EF-Tu.GTP complex up to the GTP hydrolysis stage on the ribosome. In Shewanella denitrificans (strain OS217 / ATCC BAA-1090 / DSM 15013), this protein is Elongation factor Ts.